Consider the following 127-residue polypeptide: Small ribosomal subunit protein uS12 (127 aa).

A 3-methylthioaspartic acid modification is found at Asp89. The interval 104-127 is disordered; sequence TQGVKDRKQARSKYGTKRAKAGKK. The span at 113–127 shows a compositional bias: basic residues; that stretch reads ARSKYGTKRAKAGKK.

It belongs to the universal ribosomal protein uS12 family. In terms of assembly, part of the 30S ribosomal subunit. Contacts proteins S8 and S17. May interact with IF1 in the 30S initiation complex.

Its function is as follows. With S4 and S5 plays an important role in translational accuracy. Functionally, interacts with and stabilizes bases of the 16S rRNA that are involved in tRNA selection in the A site and with the mRNA backbone. Located at the interface of the 30S and 50S subunits, it traverses the body of the 30S subunit contacting proteins on the other side and probably holding the rRNA structure together. The combined cluster of proteins S8, S12 and S17 appears to hold together the shoulder and platform of the 30S subunit. The protein is Small ribosomal subunit protein uS12 of Herminiimonas arsenicoxydans.